The following is a 953-amino-acid chain: Eukaryotic translation initiation factor 3 subunit A (953 aa).

Positions 323-504 (LQKMASHVLL…KSISFGLDLH (182 aa)) constitute a PCI domain. Coiled coils occupy residues 593–642 (QERE…KRQA), 670–704 (MNADDIIAKQVEQLDKEKRELQTKLKTQEKKVDYF), and 732–877 (ENQE…LEER). The segment at 603–623 (IKKQKVENQEAEQKRLDEERR) is disordered. Disordered regions lie at residues 810–861 (ERKK…EIDR) and 893–953 (GWGD…ITMS). Basic and acidic residues-rich tracts occupy residues 812-861 (KKIE…EIDR), 895-919 (GDHEDGGDRWRDERGGDRGPDRGGD), and 928-953 (WQREEPDRGGDRWRGGDRRDGMITMS).

This sequence belongs to the eIF-3 subunit A family. Component of the eukaryotic translation initiation factor 3 (eIF-3) complex.

Its subcellular location is the cytoplasm. Its function is as follows. RNA-binding component of the eukaryotic translation initiation factor 3 (eIF-3) complex, which is involved in protein synthesis of a specialized repertoire of mRNAs and, together with other initiation factors, stimulates binding of mRNA and methionyl-tRNAi to the 40S ribosome. The eIF-3 complex specifically targets and initiates translation of a subset of mRNAs involved in cell proliferation. This is Eukaryotic translation initiation factor 3 subunit A from Nematostella vectensis (Starlet sea anemone).